Consider the following 139-residue polypeptide: D-ribose pyranase (139 aa).

The Proton donor role is filled by His-20. Residues Asp-28, His-106, and 128-130 (YAN) contribute to the substrate site.

This sequence belongs to the RbsD / FucU family. RbsD subfamily. As to quaternary structure, homodecamer.

It localises to the cytoplasm. The catalysed reaction is beta-D-ribopyranose = beta-D-ribofuranose. The protein operates within carbohydrate metabolism; D-ribose degradation; D-ribose 5-phosphate from beta-D-ribopyranose: step 1/2. Functionally, catalyzes the interconversion of beta-pyran and beta-furan forms of D-ribose. The chain is D-ribose pyranase from Escherichia coli O45:K1 (strain S88 / ExPEC).